Reading from the N-terminus, the 560-residue chain is Thermosome subunit alpha (560 aa).

The segment covering 535–547 has biased composition (basic and acidic residues); sequence SEKKGGEGSKEES. The tract at residues 535-560 is disordered; sequence SEKKGGEGSKEESGGEGGAGTPSLGD.

Belongs to the TCP-1 chaperonin family. In terms of assembly, forms a heterooligomeric complex of two stacked nine-membered rings; one of alpha and the other of beta subunits. Sometimes called a 'rosettasome'.

The protein resides in the cytoplasm. It catalyses the reaction ATP + H2O = ADP + phosphate + H(+). Molecular chaperone; binds unfolded polypeptides in vitro, stimulates protein folding and has ATPase activity. One of the most abundant proteins in the cell at all temperatures. The chain is Thermosome subunit alpha (thsA) from Saccharolobus shibatae (strain ATCC 51178 / DSM 5389 / JCM 8931 / NBRC 15437 / B12) (Sulfolobus shibatae).